The following is a 345-amino-acid chain: Methionine import ATP-binding protein MetN (345 aa).

The 240-residue stretch at 2–241 (IKLNNIXKIF…PKTELAQEFI (240 aa)) folds into the ABC transporter domain. 38–45 (GASGAGKS) serves as a coordination point for ATP.

Belongs to the ABC transporter superfamily. Methionine importer (TC 3.A.1.24) family. The complex is composed of two ATP-binding proteins (MetN), two transmembrane proteins (MetI) and a solute-binding protein (MetQ).

The protein resides in the cell inner membrane. It carries out the reaction L-methionine(out) + ATP + H2O = L-methionine(in) + ADP + phosphate + H(+). The catalysed reaction is D-methionine(out) + ATP + H2O = D-methionine(in) + ADP + phosphate + H(+). Functionally, part of the ABC transporter complex MetNIQ involved in methionine import. Responsible for energy coupling to the transport system. The chain is Methionine import ATP-binding protein MetN from Haemophilus influenzae (strain ATCC 51907 / DSM 11121 / KW20 / Rd).